The primary structure comprises 51 residues: uncharacterized protein (51 aa).

The segment at 1–42 (MKMKTNKYMNMVRPAPPRRADPEGVRDPSTMGGGPNPFLRRS) is disordered.

The protein resides in the mitochondrion. This is an uncharacterized protein from Saccharomyces cerevisiae (strain ATCC 204508 / S288c) (Baker's yeast).